A 117-amino-acid polypeptide reads, in one-letter code: Large ribosomal subunit protein bL20 (117 aa).

It belongs to the bacterial ribosomal protein bL20 family.

Functionally, binds directly to 23S ribosomal RNA and is necessary for the in vitro assembly process of the 50S ribosomal subunit. It is not involved in the protein synthesizing functions of that subunit. This Photobacterium profundum (strain SS9) protein is Large ribosomal subunit protein bL20.